Here is a 150-residue protein sequence, read N- to C-terminus: Large ribosomal subunit protein bL9 (150 aa).

It belongs to the bacterial ribosomal protein bL9 family.

In terms of biological role, binds to the 23S rRNA. This chain is Large ribosomal subunit protein bL9, found in Ralstonia pickettii (strain 12J).